A 326-amino-acid polypeptide reads, in one-letter code: 3-isopropylmalate dehydrogenase (326 aa).

Residues Arg81, Arg91, Arg112, and Asp198 each coordinate substrate. Positions 198, 222, and 226 each coordinate Mg(2+). Position 255–267 (255–267 (GAAFDIAGKGIAN)) interacts with NAD(+).

The protein belongs to the isocitrate and isopropylmalate dehydrogenases family. In terms of assembly, homotetramer. Requires Mg(2+) as cofactor. The cofactor is Mn(2+).

It is found in the cytoplasm. It carries out the reaction (2R,3S)-3-isopropylmalate + NAD(+) = 4-methyl-2-oxopentanoate + CO2 + NADH. It participates in amino-acid biosynthesis; L-leucine biosynthesis; L-leucine from 3-methyl-2-oxobutanoate: step 3/4. Its function is as follows. Catalyzes the oxidation of 3-carboxy-2-hydroxy-4-methylpentanoate (3-isopropylmalate) to 3-carboxy-4-methyl-2-oxopentanoate. The product decarboxylates to 4-methyl-2 oxopentanoate. The sequence is that of 3-isopropylmalate dehydrogenase (leuB) from Archaeoglobus fulgidus (strain ATCC 49558 / DSM 4304 / JCM 9628 / NBRC 100126 / VC-16).